The following is a 117-amino-acid chain: Immunoglobulin lambda variable 2 (117 aa).

Positions 1-19 are cleaved as a signal peptide; sequence MAWTSLILSLLALCSGASS. Gln-20 is modified (pyrrolidone carboxylic acid). Positions 20–117 constitute an Ig-like domain; it reads QAVVTQESAL…FCALWYSTHF (98 aa).

This chain is Immunoglobulin lambda variable 2, found in Mus musculus (Mouse).